Here is a 330-residue protein sequence, read N- to C-terminus: Methionyl-tRNA formyltransferase (330 aa).

116 to 119 is a binding site for (6S)-5,6,7,8-tetrahydrofolate; the sequence is SLLP.

It belongs to the Fmt family.

It catalyses the reaction L-methionyl-tRNA(fMet) + (6R)-10-formyltetrahydrofolate = N-formyl-L-methionyl-tRNA(fMet) + (6S)-5,6,7,8-tetrahydrofolate + H(+). In terms of biological role, attaches a formyl group to the free amino group of methionyl-tRNA(fMet). The formyl group appears to play a dual role in the initiator identity of N-formylmethionyl-tRNA by promoting its recognition by IF2 and preventing the misappropriation of this tRNA by the elongation apparatus. This is Methionyl-tRNA formyltransferase from Nitratidesulfovibrio vulgaris (strain ATCC 29579 / DSM 644 / CCUG 34227 / NCIMB 8303 / VKM B-1760 / Hildenborough) (Desulfovibrio vulgaris).